The primary structure comprises 484 residues: Sorting assembly machinery 50 kDa subunit (484 aa).

This sequence belongs to the SAM50/omp85 family. Component of the mitochondrial outer membrane sorting assembly machinery (SAM or TOB) complex, which at least consists of SAM35, SAM37 and SAM50. Associates with the mitochondrial contact site and cristae organizing system (MICOS) complex (also known as MINOS or MitOS complex).

The protein localises to the mitochondrion outer membrane. Its function is as follows. Component of the mitochondrial outer membrane sorting assembly machinery (SAM or TOB) complex, which is required for the sorting of proteins with complicated topology, such as beta-barrel proteins, to the mitochondrial outer membrane after import by the TOM complex. This chain is Sorting assembly machinery 50 kDa subunit (SAM50), found in Saccharomyces cerevisiae (strain ATCC 204508 / S288c) (Baker's yeast).